The following is a 421-amino-acid chain: Subtilisin-like protease 2 (421 aa).

An N-terminal signal peptide occupies residues 1 to 16 (MQLLNFGLLLLPFVAG). The propeptide occupies 17 to 122 (DLAPQPEPLL…VHPDQHFYLA (106 aa)). Residues 36 to 121 (QYLVTLKEGL…SVHPDQHFYL (86 aa)) form the Inhibitor I9 domain. The Peptidase S8 domain maps to 131–421 (RWGLGYMSSK…ERKCKLPKYY (291 aa)). Asp-169 functions as the Charge relay system in the catalytic mechanism. N-linked (GlcNAc...) asparagine glycosylation is present at Asn-192. Catalysis depends on His-201, which acts as the Charge relay system. N-linked (GlcNAc...) asparagine glycans are attached at residues Asn-248, Asn-261, and Asn-348. Ser-357 acts as the Charge relay system in catalysis. N-linked (GlcNAc...) asparagine glycosylation is present at Asn-388.

The protein belongs to the peptidase S8 family.

It localises to the secreted. In terms of biological role, secreted subtilisin-like serine protease with keratinolytic activity that contributes to pathogenicity. This chain is Subtilisin-like protease 2 (SUB2), found in Trichophyton rubrum (Athlete's foot fungus).